The sequence spans 340 residues: S-adenosylmethionine:tRNA ribosyltransferase-isomerase (340 aa).

The protein belongs to the QueA family. As to quaternary structure, monomer.

The protein localises to the cytoplasm. The enzyme catalyses 7-aminomethyl-7-carbaguanosine(34) in tRNA + S-adenosyl-L-methionine = epoxyqueuosine(34) in tRNA + adenine + L-methionine + 2 H(+). Its pathway is tRNA modification; tRNA-queuosine biosynthesis. Its function is as follows. Transfers and isomerizes the ribose moiety from AdoMet to the 7-aminomethyl group of 7-deazaguanine (preQ1-tRNA) to give epoxyqueuosine (oQ-tRNA). The chain is S-adenosylmethionine:tRNA ribosyltransferase-isomerase from Chromobacterium violaceum (strain ATCC 12472 / DSM 30191 / JCM 1249 / CCUG 213 / NBRC 12614 / NCIMB 9131 / NCTC 9757 / MK).